The chain runs to 510 residues: D-allose import ATP-binding protein AlsA (510 aa).

2 consecutive ABC transporter domains span residues 6–245 (ISMA…VGRE) and 260–509 (LAHE…ALPQ). 38–45 (GENGAGKS) contributes to the ATP binding site.

Belongs to the ABC transporter superfamily. D-allose importer (TC 3.A.1.2.6) family. The complex is composed of two ATP-binding proteins (AlsA), two transmembrane proteins (AlsC) and a solute-binding protein (AlsB).

The protein localises to the cell inner membrane. It carries out the reaction D-allose(out) + ATP + H2O = D-allose(in) + ADP + phosphate + H(+). Functionally, part of the ABC transporter complex AlsBAC involved in D-allose import. Probably responsible for energy coupling to the transport system. The protein is D-allose import ATP-binding protein AlsA (alsA) of Escherichia coli (strain K12).